Here is a 407-residue protein sequence, read N- to C-terminus: Bifunctional enzyme IspD/IspF (407 aa).

The segment at 1–246 (MTEASENASA…SSERTHFPDI (246 aa)) is 2-C-methyl-D-erythritol 4-phosphate cytidylyltransferase. Residues 247–407 (RTGNGYDVHA…SVVFPGEVPE (161 aa)) are 2-C-methyl-D-erythritol 2,4-cyclodiphosphate synthase. Aspartate 253 and histidine 255 together coordinate a divalent metal cation. 4-CDP-2-C-methyl-D-erythritol 2-phosphate contacts are provided by residues 253–255 (DVH) and 279–280 (HS). Histidine 287 is a binding site for a divalent metal cation. Residues 301–303 (DIG), 377–380 (TTNE), phenylalanine 384, and arginine 387 contribute to the 4-CDP-2-C-methyl-D-erythritol 2-phosphate site.

This sequence in the N-terminal section; belongs to the IspD/TarI cytidylyltransferase family. IspD subfamily. It in the C-terminal section; belongs to the IspF family. A divalent metal cation serves as cofactor.

It catalyses the reaction 2-C-methyl-D-erythritol 4-phosphate + CTP + H(+) = 4-CDP-2-C-methyl-D-erythritol + diphosphate. The enzyme catalyses 4-CDP-2-C-methyl-D-erythritol 2-phosphate = 2-C-methyl-D-erythritol 2,4-cyclic diphosphate + CMP. It participates in isoprenoid biosynthesis; isopentenyl diphosphate biosynthesis via DXP pathway; isopentenyl diphosphate from 1-deoxy-D-xylulose 5-phosphate: step 2/6. Its pathway is isoprenoid biosynthesis; isopentenyl diphosphate biosynthesis via DXP pathway; isopentenyl diphosphate from 1-deoxy-D-xylulose 5-phosphate: step 4/6. In terms of biological role, bifunctional enzyme that catalyzes the formation of 4-diphosphocytidyl-2-C-methyl-D-erythritol from CTP and 2-C-methyl-D-erythritol 4-phosphate (MEP) (IspD), and catalyzes the conversion of 4-diphosphocytidyl-2-C-methyl-D-erythritol 2-phosphate (CDP-ME2P) to 2-C-methyl-D-erythritol 2,4-cyclodiphosphate (ME-CPP) with a corresponding release of cytidine 5-monophosphate (CMP) (IspF). The sequence is that of Bifunctional enzyme IspD/IspF from Mesorhizobium japonicum (strain LMG 29417 / CECT 9101 / MAFF 303099) (Mesorhizobium loti (strain MAFF 303099)).